Reading from the N-terminus, the 504-residue chain is DnaJ homolog subfamily C member 3 (504 aa).

The N-terminal stretch at 1–31 (MVAPGSVGSRLGAVFPFLLVLVDLQYEGAEC) is a signal peptide. TPR repeat units lie at residues 37–70 (VEKH…DPDN), 72–104 (IAYY…KMDF), 105–138 (TAAR…NPSE), 154–187 (MQRL…CVWD), 188–221 (AELR…KSDN), 222–255 (TEAF…DQDH), 268–301 (LNKL…EPSV), 306–339 (VRSK…EPDN), and 340–373 (VNAL…NEND). Cysteines 248 and 258 form a disulfide. Ser-274 is modified (phosphoserine). Cys-313 and Cys-329 are disulfide-bonded. Residues 375 to 393 (QIREGLEKAQRLLKQSQKR) form a flexible linker region. Residues 394–462 (DYYKILGVKR…EMRKKFDDGE (69 aa)) form the J domain. The disordered stretch occupies residues 451-481 (DPEMRKKFDDGEDPLDAESQQGGGGNPFHRS).

In terms of assembly, interacts with EIF2AK4/GCN2; this interaction occurs under endoplasmic reticulum (ER) stress, hypothermic and amino acid starving stress conditions and inhibits EIF2AK4/GCN2 kinase activity. Interacts with EIF2AK3. Interacts with EIF2AK2. Forms a trimeric complex with DNAJB1 and HSPA8. Interacts with THAP12. As to expression, widely expressed, with high level in the liver.

The protein resides in the endoplasmic reticulum. In terms of biological role, involved in the unfolded protein response (UPR) during endoplasmic reticulum (ER) stress. Acts as a negative regulator of the EIF2AK4/GCN2 kinase activity by preventing the phosphorylation of eIF-2-alpha at 'Ser-52' and hence attenuating general protein synthesis under ER stress, hypothermic and amino acid starving stress conditions. Co-chaperone of HSPA8/HSC70, it stimulates its ATPase activity. May inhibit both the autophosphorylation of EIF2AK2/PKR and the ability of EIF2AK2 to catalyze phosphorylation of the EIF2A. May inhibit EIF2AK3/PERK activity. This is DnaJ homolog subfamily C member 3 (Dnajc3) from Mus musculus (Mouse).